Consider the following 489-residue polypeptide: Cytochrome P450 2C3 (489 aa).

Cysteine 434 contributes to the heme binding site.

The protein belongs to the cytochrome P450 family. It depends on heme as a cofactor.

It localises to the endoplasmic reticulum membrane. It is found in the microsome membrane. It carries out the reaction an organic molecule + reduced [NADPH--hemoprotein reductase] + O2 = an alcohol + oxidized [NADPH--hemoprotein reductase] + H2O + H(+). In terms of biological role, cytochromes P450 are a group of heme-thiolate monooxygenases. In liver microsomes, this enzyme is involved in an NADPH-dependent electron transport pathway. It oxidizes a variety of structurally unrelated compounds, including steroids, fatty acids, and xenobiotics. The chain is Cytochrome P450 2C3 (CYP2C3) from Oryctolagus cuniculus (Rabbit).